Here is a 467-residue protein sequence, read N- to C-terminus: Cysteine--tRNA ligase (467 aa).

Residue Cys-28 coordinates Zn(2+). The short motif at 30 to 40 (MTVYDHCHLGH) is the 'HIGH' region element. The Zn(2+) site is built by Cys-209, His-234, and Glu-238. The 'KMSKS' region motif lies at 266-270 (KMSKS). ATP is bound at residue Lys-269.

It belongs to the class-I aminoacyl-tRNA synthetase family. As to quaternary structure, monomer. Zn(2+) serves as cofactor.

It localises to the cytoplasm. The enzyme catalyses tRNA(Cys) + L-cysteine + ATP = L-cysteinyl-tRNA(Cys) + AMP + diphosphate. The polypeptide is Cysteine--tRNA ligase (Nitrosomonas eutropha (strain DSM 101675 / C91 / Nm57)).